A 411-amino-acid polypeptide reads, in one-letter code: uncharacterized protein (411 aa).

In the C-terminal section; belongs to the PAPS reductase family.

This is an uncharacterized protein from Methanocaldococcus jannaschii (strain ATCC 43067 / DSM 2661 / JAL-1 / JCM 10045 / NBRC 100440) (Methanococcus jannaschii).